Here is a 292-residue protein sequence, read N- to C-terminus: Sulfofructosephosphate aldolase (292 aa).

Lysine 193 (schiff-base intermediate with substrate) is an active-site residue.

This sequence belongs to the aldolase LacD family. In terms of assembly, homotetramer.

The catalysed reaction is 6-deoxy-6-sulfo-D-fructose 1-phosphate = (2S)-3-sulfolactaldehyde + dihydroxyacetone phosphate. In terms of biological role, cleaves 6-deoxy-6-sulfo-D-fructose 1-phosphate (SFP) to form dihydroxyacetone phosphate (DHAP) and 3-sulfolactaldehyde (SLA). Can also catalyze the reverse reaction. The polypeptide is Sulfofructosephosphate aldolase (yihT) (Salmonella typhimurium (strain LT2 / SGSC1412 / ATCC 700720)).